The sequence spans 99 residues: Small ribosomal subunit protein uS19 (99 aa).

The interval 77 to 99 is disordered; sequence TRTFHGHSGDKKAKVAKGGPGGR.

It belongs to the universal ribosomal protein uS19 family.

Functionally, protein S19 forms a complex with S13 that binds strongly to the 16S ribosomal RNA. This is Small ribosomal subunit protein uS19 from Sorangium cellulosum (strain So ce56) (Polyangium cellulosum (strain So ce56)).